Reading from the N-terminus, the 145-residue chain is MFFGTFNHAIDAKGRTSLPVKFRESLAAAGEPRIVLMQYPHWRAVQALPQSVWNELVKKVMDASPLDARTQRSVLKFVSSAHEVDLDANGRVLVPPALREWAGLQKDVVWVGMGRTIHLYDKAAYETQVAEEIPSDQVVDFFGKV.

2 consecutive SpoVT-AbrB domains span residues 5 to 50 and 81 to 124; these read TFNH…ALPQ and AHEV…DKAA.

It belongs to the MraZ family. As to quaternary structure, forms oligomers.

The protein localises to the cytoplasm. The protein resides in the nucleoid. The protein is Transcriptional regulator MraZ of Anaeromyxobacter sp. (strain Fw109-5).